We begin with the raw amino-acid sequence, 637 residues long: 1-deoxy-D-xylulose-5-phosphate synthase (637 aa).

Thiamine diphosphate-binding positions include His71 and 112–114 (SHA). Residue Asp144 participates in Mg(2+) binding. Residues 145 to 146 (GA), Asn173, Tyr284, and Glu365 each bind thiamine diphosphate. Asn173 provides a ligand contact to Mg(2+).

It belongs to the transketolase family. DXPS subfamily. In terms of assembly, homodimer. The cofactor is Mg(2+). Thiamine diphosphate is required as a cofactor.

It catalyses the reaction D-glyceraldehyde 3-phosphate + pyruvate + H(+) = 1-deoxy-D-xylulose 5-phosphate + CO2. Its pathway is metabolic intermediate biosynthesis; 1-deoxy-D-xylulose 5-phosphate biosynthesis; 1-deoxy-D-xylulose 5-phosphate from D-glyceraldehyde 3-phosphate and pyruvate: step 1/1. Functionally, catalyzes the acyloin condensation reaction between C atoms 2 and 3 of pyruvate and glyceraldehyde 3-phosphate to yield 1-deoxy-D-xylulose-5-phosphate (DXP). The chain is 1-deoxy-D-xylulose-5-phosphate synthase from Mycolicibacterium gilvum (strain PYR-GCK) (Mycobacterium gilvum (strain PYR-GCK)).